The sequence spans 112 residues: uncharacterized protein (112 aa).

The chain crosses the membrane as a helical span at residues 85 to 105; sequence IVQLIILFAIIITNPNAIELI.

The protein belongs to the M.jannaschii MJ0023/MJ0349/MJ1072/MJ1074/MJ1107/MJECL16 family.

It is found in the membrane. This is an uncharacterized protein from Methanocaldococcus jannaschii (strain ATCC 43067 / DSM 2661 / JAL-1 / JCM 10045 / NBRC 100440) (Methanococcus jannaschii).